Consider the following 208-residue polypeptide: Histone H1t (208 aa).

Residues 1 to 12 (MSETAPAASSTL) show a composition bias toward polar residues. Positions 1-39 (MSETAPAASSTLVPAPVEKPSSKRRGKKPGLAPARKPRG) are disordered. Serine 9 carries the phosphoserine modification. In terms of domain architecture, H15 spans 38–111 (RGFSVSKLIP…GASGSFKLSK (74 aa)). The residue at position 56 (arginine 56) is a Citrulline. The tract at residues 95–208 (LVQTKGTGAS…TDLRKAAGRK (114 aa)) is disordered. Residues 121 to 134 (KGKKSASAKAKKMG) show a composition bias toward basic residues. Residue serine 141 is modified to Phosphoserine. Residues 143 to 154 (KSSKTKAVKKPK) are compositionally biased toward basic residues. Threonine 156 carries the post-translational modification Phosphothreonine. Residues serine 163 and serine 178 each carry the phosphoserine modification. The span at 199–208 (TDLRKAAGRK) shows a compositional bias: basic and acidic residues.

Belongs to the histone H1/H5 family. In terms of processing, phosphorylated in early spermatids. Post-translationally, citrullination at Arg-56 (H1R54ci) by PADI4 takes place within the DNA-binding site of H1 and results in its displacement from chromatin and global chromatin decondensation, thereby promoting pluripotency and stem cell maintenance. Testis-specific.

Its subcellular location is the nucleus. It localises to the chromosome. Functionally, testis-specific histone H1 that forms less compacted chromatin compared to other H1 histone subtypes. Formation of more relaxed chromatin may be required to promote chromatin architecture required for proper chromosome regulation during meiosis, such as homologous recombination. Histones H1 act as linkers that bind to nucleosomes and compact polynucleosomes into a higher-order chromatin configuration. This chain is Histone H1t, found in Mus musculus (Mouse).